Here is a 389-residue protein sequence, read N- to C-terminus: Large envelope protein (389 aa).

An N-acetylmethionine modification is found at Met-1. A lipid anchor (N-myristoyl glycine; by host) is attached at Gly-2. Positions 2–108 are pre-S1; the sequence is GQNLSTSNPL…PPLRNTHPQA (107 aa). The segment at 2–163 is pre-S; that stretch reads GQNLSTSNPL…FSRIGDPALN (162 aa). The Virion surface; in external conformation segment spans residues 2–170; the sequence is GQNLSTSNPL…ALNMENITSG (169 aa). Residues 2 to 242 lie on the Intravirion; in internal conformation side of the membrane; the sequence is GQNLSTSNPL…PGYRWMCLRR (241 aa). Residues 77-101 are disordered; that stretch reads LPANPPPASTNRQTGRQPTPLSPPL. Positions 85–95 are enriched in polar residues; that stretch reads STNRQTGRQPT. Residues 109–163 are pre-S2; that stretch reads MQWNSTTFHQTLQDPRVRGLYFPAGGSSSGTVNPVPTTASPISSIFSRIGDPALN. Residues 171–191 traverse the membrane as a helical segment; that stretch reads LLGPLLVLQAGFFLLTRILTI. Residues 192-242 lie on the Intravirion; in external conformation side of the membrane; it reads PQSLDSWWTSLNFLGGTTVCLGQNSQSPTSNHSPTSCPPTCPGYRWMCLRR. A helical transmembrane segment spans residues 243–263; the sequence is FIIFLFILLLCLIFLLVLLDY. The Virion surface portion of the chain corresponds to 264–337; the sequence is QGMLPVCPLI…WASARFSWLS (74 aa). N-linked (GlcNAc...) asparagine; by host glycosylation occurs at Asn-309. Residues 338–358 traverse the membrane as a helical segment; it reads LLVPFVQWFVGLSPTVWLSVI. Topologically, residues 359 to 364 are intravirion; it reads WMMWYW. A helical membrane pass occupies residues 365 to 387; that stretch reads GPSLYRILSPFLPLLPIFFCLWV. Residues 388 to 389 are Virion surface-facing; the sequence is YI.

This sequence belongs to the orthohepadnavirus major surface antigen family. In terms of assembly, in its internal form (Li-HBsAg), interacts with the capsid protein and with the isoform S. Interacts with host chaperone CANX. As to quaternary structure, associates with host chaperone CANX through its pre-S2 N glycan; this association may be essential for isoform M proper secretion. Interacts with isoform L. Interacts with the antigens of satellite virus HDV (HDVAgs); this interaction is required for encapsidation of HDV genomic RNA. Isoform M is N-terminally acetylated by host at a ratio of 90%, and N-glycosylated by host at the pre-S2 region. In terms of processing, myristoylated.

It localises to the virion membrane. Its function is as follows. The large envelope protein exists in two topological conformations, one which is termed 'external' or Le-HBsAg and the other 'internal' or Li-HBsAg. In its external conformation the protein attaches the virus to cell receptors and thereby initiating infection. This interaction determines the species specificity and liver tropism. This attachment induces virion internalization predominantly through caveolin-mediated endocytosis. The large envelope protein also assures fusion between virion membrane and endosomal membrane. In its internal conformation the protein plays a role in virion morphogenesis and mediates the contact with the nucleocapsid like a matrix protein. In terms of biological role, the middle envelope protein plays an important role in the budding of the virion. It is involved in the induction of budding in a nucleocapsid independent way. In this process the majority of envelope proteins bud to form subviral lipoprotein particles of 22 nm of diameter that do not contain a nucleocapsid. This chain is Large envelope protein, found in Hepatitis B virus genotype D (isolate Germany/1-91/1991) (HBV-D).